A 429-amino-acid polypeptide reads, in one-letter code: Cleavage stimulation factor subunit 50 (429 aa).

The segment at Leu20–Ala41 is hydrophobic. WD repeat units lie at residues Glu121–Ser160, Asp174–Ala213, Gln218–Pro257, Gly264–Ser303, His308–Glu347, Ala351–Lys392, and Asn396–Val429.

In terms of assembly, homodimer. Belongs to the CSTF complex. Forms a complex with cleavage and polyadenylation specificity factor (CPSF) subunits CSTF64, PABN3, CPSF30, FIPS5 and CPSF100.

The protein resides in the nucleus. In terms of biological role, one of the multiple factors required for polyadenylation and 3'-end cleavage of pre-mRNAs. May be responsible for the interaction of CSTF with other factors to form a stable complex on the pre-mRNA. This Arabidopsis thaliana (Mouse-ear cress) protein is Cleavage stimulation factor subunit 50.